Consider the following 699-residue polypeptide: Elongation factor G (699 aa).

The tr-type G domain maps to 8–283; sequence EHIRNIGICA…AVVDFLPSPI (276 aa). GTP-binding positions include 17 to 24, 81 to 85, and 135 to 138; these read AHIDAGKT, DTPGH, and NKMD.

The protein belongs to the TRAFAC class translation factor GTPase superfamily. Classic translation factor GTPase family. EF-G/EF-2 subfamily.

It is found in the cytoplasm. Functionally, catalyzes the GTP-dependent ribosomal translocation step during translation elongation. During this step, the ribosome changes from the pre-translocational (PRE) to the post-translocational (POST) state as the newly formed A-site-bound peptidyl-tRNA and P-site-bound deacylated tRNA move to the P and E sites, respectively. Catalyzes the coordinated movement of the two tRNA molecules, the mRNA and conformational changes in the ribosome. The sequence is that of Elongation factor G from Rickettsia parkeri.